The primary structure comprises 943 residues: 2-oxoglutarate dehydrogenase E1 component (943 aa).

This sequence belongs to the alpha-ketoglutarate dehydrogenase family. In terms of assembly, homodimer. Part of the 2-oxoglutarate dehydrogenase (OGDH) complex composed of E1 (2-oxoglutarate dehydrogenase), E2 (dihydrolipoamide succinyltransferase) and E3 (dihydrolipoamide dehydrogenase); the complex contains multiple copies of the three enzymatic components (E1, E2 and E3). The cofactor is thiamine diphosphate.

It carries out the reaction N(6)-[(R)-lipoyl]-L-lysyl-[protein] + 2-oxoglutarate + H(+) = N(6)-[(R)-S(8)-succinyldihydrolipoyl]-L-lysyl-[protein] + CO2. Functionally, E1 component of the 2-oxoglutarate dehydrogenase (OGDH) complex which catalyzes the decarboxylation of 2-oxoglutarate, the first step in the conversion of 2-oxoglutarate to succinyl-CoA and CO(2). In Azotobacter vinelandii, this protein is 2-oxoglutarate dehydrogenase E1 component (sucA).